Here is a 347-residue protein sequence, read N- to C-terminus: Phenylalanine--tRNA ligase alpha subunit (347 aa).

Glutamate 265 contributes to the Mg(2+) binding site.

It belongs to the class-II aminoacyl-tRNA synthetase family. Phe-tRNA synthetase alpha subunit type 1 subfamily. Tetramer of two alpha and two beta subunits. The cofactor is Mg(2+).

It is found in the cytoplasm. The enzyme catalyses tRNA(Phe) + L-phenylalanine + ATP = L-phenylalanyl-tRNA(Phe) + AMP + diphosphate + H(+). This chain is Phenylalanine--tRNA ligase alpha subunit, found in Wolbachia pipientis subsp. Culex pipiens (strain wPip).